We begin with the raw amino-acid sequence, 153 residues long: Glucose-6-phosphate 1-dehydrogenase (153 aa).

R21 and K120 together coordinate NADP(+). K120 is a binding site for D-glucose 6-phosphate.

It belongs to the glucose-6-phosphate dehydrogenase family.

It is found in the cytoplasm. The protein localises to the cytosol. The enzyme catalyses D-glucose 6-phosphate + NADP(+) = 6-phospho-D-glucono-1,5-lactone + NADPH + H(+). It functions in the pathway carbohydrate degradation; pentose phosphate pathway; D-ribulose 5-phosphate from D-glucose 6-phosphate (oxidative stage): step 1/3. Functionally, cytosolic glucose-6-phosphate dehydrogenase that catalyzes the first and rate-limiting step of the oxidative branch within the pentose phosphate pathway/shunt, an alternative route to glycolysis for the dissimilation of carbohydrates and a major source of reducing power and metabolic intermediates for fatty acid and nucleic acid biosynthetic processes. This Drosophila simulans (Fruit fly) protein is Glucose-6-phosphate 1-dehydrogenase (Zw).